Reading from the N-terminus, the 165-residue chain is Shikimate kinase (165 aa).

12–17 (GCGKST) provides a ligand contact to ATP. Ser16 provides a ligand contact to Mg(2+). Asp34, Arg57, and Gly79 together coordinate substrate. Arg116 lines the ATP pocket. Residue Arg133 coordinates substrate.

It belongs to the shikimate kinase family. In terms of assembly, monomer. Mg(2+) serves as cofactor.

Its subcellular location is the cytoplasm. It catalyses the reaction shikimate + ATP = 3-phosphoshikimate + ADP + H(+). The protein operates within metabolic intermediate biosynthesis; chorismate biosynthesis; chorismate from D-erythrose 4-phosphate and phosphoenolpyruvate: step 5/7. Its function is as follows. Catalyzes the specific phosphorylation of the 3-hydroxyl group of shikimic acid using ATP as a cosubstrate. The protein is Shikimate kinase of Clostridium botulinum (strain Alaska E43 / Type E3).